A 148-amino-acid polypeptide reads, in one-letter code: Large ribosomal subunit protein bL9 (148 aa).

It belongs to the bacterial ribosomal protein bL9 family.

Its function is as follows. Binds to the 23S rRNA. This is Large ribosomal subunit protein bL9 from Geobacter sulfurreducens (strain ATCC 51573 / DSM 12127 / PCA).